We begin with the raw amino-acid sequence, 307 residues long: MATITAAMVKDLRETTGVGMMDCKQALTENDGDMQAAIDWLRKKGLSKAAKKAGRVAAEGLIGAVTSGNKGVVVEVNSETDFVARNEQFQGLVKMVAQVALSVGADVEVIKAAKVGSATVETAISDAIATIGENMTLRRAASLEVSKGLVASYVHNAVIDGAGKMGVIVALESSGNADELAALGRQIAMHVASSNPLAIDPSGVDPAVVKREKDILADKFRQQGKPEAMIEKITESGLKTFFKEQTLLEQPFIFDDKKSVGQALKDAEGKVGAPVKLTGFVRYALGEGIEKAESDFAAEVAAAAGQG.

The tract at residues 80-83 (TDFV) is involved in Mg(2+) ion dislocation from EF-Tu.

Belongs to the EF-Ts family.

Its subcellular location is the cytoplasm. Associates with the EF-Tu.GDP complex and induces the exchange of GDP to GTP. It remains bound to the aminoacyl-tRNA.EF-Tu.GTP complex up to the GTP hydrolysis stage on the ribosome. The polypeptide is Elongation factor Ts (Nitrobacter hamburgensis (strain DSM 10229 / NCIMB 13809 / X14)).